The chain runs to 1157 residues: Zinc finger protein 516 (1157 aa).

Positions 1-13 (MDRSREAEMELRR) are enriched in basic and acidic residues. Residues 1-26 (MDRSREAEMELRRGPSPPRAGRSHEV) form a disordered region. Residues 1 to 420 (MDRSREAEME…ATRGKVAEPA (420 aa)) are mediates promoter DNA-binding and activation of transcription. C2H2-type zinc fingers lie at residues 34–56 (HSCC…MRKH), 62–84 (YKCP…IRSH), 162–185 (VPCS…HQAH), 188–211 (FKCR…ERDH), 236–258 (FPCE…MKKH), 264–286 (HGCH…MKAH), and 323–345 (EVCT…NAIH). A compositionally biased stretch (basic and acidic residues) spans 449 to 458 (SQEKRKREQD). Disordered regions lie at residues 449–503 (SQEK…QGKS) and 523–653 (SRVH…KGPE). The span at 494–503 (ASATTGQGKS) shows a compositional bias: polar residues. Residues 504-526 (SECFECGKIFRTYHQMVLHSRVH) form a C2H2-type 8 zinc finger. The span at 531 to 541 (RDRDPEGDRAA) shows a compositional bias: basic and acidic residues. Over residues 550–561 (EGDSASQPSSPG) the composition is skewed to polar residues. Residues 575 to 585 (EVVDDSGEEAV) are compositionally biased toward acidic residues. A compositionally biased stretch (polar residues) spans 601–612 (GEVTPTALSNGD). K630 participates in a covalent cross-link: Glycyl lysine isopeptide (Lys-Gly) (interchain with G-Cter in SUMO2). The segment covering 644 to 653 (SSRETTKGPE) has biased composition (basic and acidic residues). K669 is covalently cross-linked (Glycyl lysine isopeptide (Lys-Gly) (interchain with G-Cter in SUMO2)). The C2H2-type 9; atypical zinc-finger motif lies at 753–776 (HPCPYCTHKTYYPEVLWMHKRIWH). 2 disordered regions span residues 831–996 (TQVP…EPSV) and 1013–1040 (RGEA…AEGQ). Residues 914–928 (GSGSLSRSTTPTPSV) show a composition bias toward polar residues. Glycyl lysine isopeptide (Lys-Gly) (interchain with G-Cter in SUMO2) cross-links involve residues K1032 and K1051. The C2H2-type 10 zinc-finger motif lies at 1092 to 1114 (FVCVECGKSFHQPSQLRAHLRAH). The segment at 1123–1157 (PRDSEVHTASTDAPKQGRDHTTPGTVPAGPLRKGI) is disordered.

Belongs to the krueppel C2H2-type zinc-finger protein family. Interacts with PRDM16; the interaction is direct and may play a role in the transcription of brown adipose tissue-specific genes. Interacts with PWWP2B. Interacts with HDAC1; this interaction is enhanced in the presence of PWWP2B. As to expression, expressed by adipocytes more specifically in brown adipose tissue compared to white adipose tissue (WAT).

Its subcellular location is the nucleus. Transcriptional regulator that binds to the promoter and activates the transcription of genes promoting brown adipose tissue (BAT) differentiation. Among brown adipose tissue-specific genes, binds the proximal region of the promoter of the UCP1 gene to activate its transcription and thereby regulate thermogenesis. May also play a role in the cellular response to replication stress. This Mus musculus (Mouse) protein is Zinc finger protein 516.